The primary structure comprises 101 residues: UPF0358 protein EF_2458 (101 aa).

This sequence belongs to the UPF0358 family.

In Enterococcus faecalis (strain ATCC 700802 / V583), this protein is UPF0358 protein EF_2458.